The sequence spans 946 residues: Protocadherin alpha-10 (946 aa).

A signal peptide spans 1-30 (MSCVAMKYCHESWCLLLSLLLFAIWEPGSG). 6 Cadherin domains span residues 31–134 (QLRY…PPVF), 135–243 (PTTE…APAF), 244–351 (DRAI…APKI), 352–456 (IVTS…APAF), 457–566 (AQSE…APTL), and 582–679 (VPRS…APKA). Residues 31 to 697 (QLRYSVPEEA…ASESSVVDVN (667 aa)) are Extracellular-facing. An N-linked (GlcNAc...) asparagine glycan is attached at Asn-258. N-linked (GlcNAc...) asparagine glycosylation occurs at Asn-549. A helical transmembrane segment spans residues 698–718 (VYLIIAICAVSSLLVLTLVLY). Residues 719 to 946 (TALRCSALPT…GNSTTDNSDQ (228 aa)) lie on the Cytoplasmic side of the membrane. PXXP repeat units follow at residues 734 to 737 (PGKP), 774 to 777 (PSVP), 795 to 798 (PRQP), 828 to 831 (PGGP), 869 to 872 (PGNP), and 887 to 890 (PGSP). The 6 X 4 AA repeats of P-X-X-P stretch occupies residues 734 to 890 (PGKPMLVCSS…PDKFIIPGSP (157 aa)). 2 disordered regions span residues 826–852 (AGPGGPDQQWPTVSSATPEPEAGEVSP) and 865–946 (FKYG…NSDQ). Residues 905–919 (DKSDFITFGKKEETK) are compositionally biased toward basic and acidic residues.

The protein resides in the cell membrane. In terms of biological role, potential calcium-dependent cell-adhesion protein. May be involved in the establishment and maintenance of specific neuronal connections in the brain. This Mus musculus (Mouse) protein is Protocadherin alpha-10.